The following is a 144-amino-acid chain: uncharacterized protein (144 aa).

This is an uncharacterized protein from Methanocaldococcus jannaschii (strain ATCC 43067 / DSM 2661 / JAL-1 / JCM 10045 / NBRC 100440) (Methanococcus jannaschii).